A 1017-amino-acid chain; its full sequence is Ubiquitin-like modifier-activating enzyme 1 (1017 aa).

2 consecutive repeat copies span residues 26 to 163 and 419 to 571. Residues 26 to 571 are 2 approximate repeats; sequence SHETMKKITS…GTKGNTQVVV (546 aa). Residues alanine 438, aspartate 464, arginine 475, lysine 488, and 536–537 each bind ATP; that span reads DN. The Glycyl thioester intermediate role is filled by cysteine 592. Residues 765 to 781 show a composition bias toward polar residues; the sequence is IQTSENEPAPSSNTQQA. The segment at 765-788 is disordered; that stretch reads IQTSENEPAPSSNTQQAGGDAEDD.

This sequence belongs to the ubiquitin-activating E1 family. In terms of assembly, monomer.

It carries out the reaction ATP + ubiquitin + [E1 ubiquitin-activating enzyme]-L-cysteine = AMP + diphosphate + S-ubiquitinyl-[E1 ubiquitin-activating enzyme]-L-cysteine.. The protein operates within protein modification; protein ubiquitination. In terms of biological role, catalyzes the first step in ubiquitin conjugation to mark cellular proteins for degradation through the ubiquitin-proteasome system. Activates ubiquitin by first adenylating its C-terminal glycine residue with ATP, and thereafter linking this residue to the side chain of a cysteine residue in E1, yielding a ubiquitin-E1 thioester and free AMP. The protein is Ubiquitin-like modifier-activating enzyme 1 (uba1) of Dictyostelium discoideum (Social amoeba).